The sequence spans 179 residues: Pyridoxal 5'-phosphate synthase subunit PdxT (179 aa).

48–50 (GES) is a binding site for L-glutamine. The active-site Nucleophile is C79. Residues R101 and 127-128 (IR) contribute to the L-glutamine site. Active-site charge relay system residues include H163 and E165.

It belongs to the glutaminase PdxT/SNO family. As to quaternary structure, in the presence of PdxS, forms a dodecamer of heterodimers. Only shows activity in the heterodimer.

It carries out the reaction aldehydo-D-ribose 5-phosphate + D-glyceraldehyde 3-phosphate + L-glutamine = pyridoxal 5'-phosphate + L-glutamate + phosphate + 3 H2O + H(+). The catalysed reaction is L-glutamine + H2O = L-glutamate + NH4(+). The protein operates within cofactor biosynthesis; pyridoxal 5'-phosphate biosynthesis. Catalyzes the hydrolysis of glutamine to glutamate and ammonia as part of the biosynthesis of pyridoxal 5'-phosphate. The resulting ammonia molecule is channeled to the active site of PdxS. The protein is Pyridoxal 5'-phosphate synthase subunit PdxT of Francisella tularensis subsp. holarctica (strain FTNF002-00 / FTA).